Here is a 243-residue protein sequence, read N- to C-terminus: MRTPTHDEFSGRLDSLNGDRSNVFGPELGEFSNADRRADELGDKETKTGTTTVGIKTEEGVVLATDMRASMGYMVSSKDVQKVEEIHPTGALTIAGSVSAAQSLISSLRAEVRLYEARRGEDMSMQALSTLVGNFLRSGGFYVVQPILGGVDETGPHIYSIDPAGSILEEEYTVTGSGSQYALGVLEQEFEDGLSIEEAKGVATKAIRSAVERDLASGNGINIAVVTEDGVDIQRHQNFEGLE.

Basic and acidic residues-rich tracts occupy residues 1-11 (MRTPTHDEFSG) and 33-47 (NADRRADELGDKETK). Residues 1-49 (MRTPTHDEFSGRLDSLNGDRSNVFGPELGEFSNADRRADELGDKETKTG) constitute a propeptide, removed in mature form; by autocatalysis. The disordered stretch occupies residues 1–50 (MRTPTHDEFSGRLDSLNGDRSNVFGPELGEFSNADRRADELGDKETKTGT). Residue T50 is the Nucleophile of the active site. S129 is subject to Phosphoserine.

It belongs to the peptidase T1B family. As to quaternary structure, the 20S proteasome core is composed of 14 alpha and 14 beta subunits that assemble into four stacked heptameric rings, resulting in a barrel-shaped structure. The two inner rings, each composed of seven catalytic beta subunits, are sandwiched by two outer rings, each composed of seven alpha subunits. H.volcanii produces at least 2 types of 20S proteasomes: an alpha1-beta proteasome and a proteasome containing all three subunits (alpha1, alpha2, and beta) that appears to be asymmetrical with homo-oligomeric alpha1 and alpha2 rings positioned on separate ends. The catalytic chamber with the active sites is on the inside of the barrel. Has probably a gated structure, the ends of the cylinder being occluded by the N-termini of the alpha-subunits. Is likely capped at one or both ends by the proteasome regulatory ATPase, PAN.

It localises to the cytoplasm. It catalyses the reaction Cleavage of peptide bonds with very broad specificity.. The formation of the proteasomal ATPase PAN-20S proteasome complex, via the docking of the C-termini of PAN into the intersubunit pockets in the alpha-rings, triggers opening of the gate for substrate entry. Interconversion between the open-gate and close-gate conformations leads to a dynamic regulation of the 20S proteasome proteolysis activity. In vitro, the chymotrypsin-like activity of the alpha1-beta proteasome is potently inhibited by carbobenzoxyl-leucinyl-leucinyl-leucinal-H (MG132) and significantly by N-acetyl-leucinyl-leucinyl-norleucinal-H (calpain inhibitor I). Functionally, component of the proteasome core, a large protease complex with broad specificity involved in protein degradation. The H.volcanii alpha1-beta proteasome is able to cleave oligopeptides after Phe, Tyr and Trp, poorly after Glu but not after Arg. Thus, displays chymotrypsin-like activity, low caspase-like activity but no trypsin-like activity. The chain is Proteasome subunit beta from Haloferax volcanii (strain ATCC 29605 / DSM 3757 / JCM 8879 / NBRC 14742 / NCIMB 2012 / VKM B-1768 / DS2) (Halobacterium volcanii).